The following is a 396-amino-acid chain: Glyceraldehyde-3-phosphate dehydrogenase GAPA1, chloroplastic (396 aa).

A chloroplast-targeting transit peptide spans 1–60 (MASVTFSVPKGFTEFSGLRSSSASLPFGKKLSSDEFVSIVSFQTSAMGSSGGYRKGVTEA). Residues 71 to 72 (RI), Asp-95, and Arg-140 each bind NADP(+). Residues 212–214 (SCT), Thr-243, Arg-258, 271–272 (TG), and Arg-294 contribute to the D-glyceraldehyde 3-phosphate site. Residue Cys-213 is the Nucleophile of the active site. Asn-376 lines the NADP(+) pocket.

Belongs to the glyceraldehyde-3-phosphate dehydrogenase family. As to quaternary structure, tetramer of either four A chains (GAPDH 2) or two A and two B chains (GAPDH 1). In terms of tissue distribution, expressed in leaves and stems.

It localises to the plastid. Its subcellular location is the chloroplast membrane. The protein localises to the chloroplast stroma. The enzyme catalyses D-glyceraldehyde 3-phosphate + phosphate + NADP(+) = (2R)-3-phospho-glyceroyl phosphate + NADPH + H(+). Its pathway is carbohydrate biosynthesis; Calvin cycle. Its function is as follows. Involved in the photosynthetic reductive pentose phosphate pathway (Calvin-Benson cycle). Catalyzes the reduction of 1,3-diphosphoglycerate by NADPH. The polypeptide is Glyceraldehyde-3-phosphate dehydrogenase GAPA1, chloroplastic (GAPA1) (Arabidopsis thaliana (Mouse-ear cress)).